A 496-amino-acid chain; its full sequence is Histidine--tRNA ligase (496 aa).

Belongs to the class-II aminoacyl-tRNA synthetase family. As to quaternary structure, homodimer.

Its subcellular location is the cytoplasm. The catalysed reaction is tRNA(His) + L-histidine + ATP = L-histidyl-tRNA(His) + AMP + diphosphate + H(+). The protein is Histidine--tRNA ligase of Bartonella bacilliformis (strain ATCC 35685 / KC583 / Herrer 020/F12,63).